We begin with the raw amino-acid sequence, 455 residues long: Bifunctional protein GlmU (455 aa).

A pyrophosphorylase region spans residues Met-1 to Arg-229. UDP-N-acetyl-alpha-D-glucosamine contacts are provided by residues Leu-8–Gly-11, Lys-22, Gln-73, and Gly-78–Thr-79. Asp-103 is a binding site for Mg(2+). UDP-N-acetyl-alpha-D-glucosamine is bound by residues Gly-140, Glu-155, Asn-170, and Asn-227. Asn-227 provides a ligand contact to Mg(2+). Residues Leu-230 to Asn-250 are linker. The segment at Gly-251–Lys-455 is N-acetyltransferase. UDP-N-acetyl-alpha-D-glucosamine-binding residues include Arg-332 and Lys-350. The active-site Proton acceptor is His-362. Residues Tyr-365 and Asn-376 each contribute to the UDP-N-acetyl-alpha-D-glucosamine site. Acetyl-CoA is bound by residues Asn-385–Tyr-386, Ala-422, and Arg-439.

The protein in the N-terminal section; belongs to the N-acetylglucosamine-1-phosphate uridyltransferase family. In the C-terminal section; belongs to the transferase hexapeptide repeat family. As to quaternary structure, homotrimer. Mg(2+) is required as a cofactor.

It localises to the cytoplasm. The enzyme catalyses alpha-D-glucosamine 1-phosphate + acetyl-CoA = N-acetyl-alpha-D-glucosamine 1-phosphate + CoA + H(+). It catalyses the reaction N-acetyl-alpha-D-glucosamine 1-phosphate + UTP + H(+) = UDP-N-acetyl-alpha-D-glucosamine + diphosphate. Its pathway is nucleotide-sugar biosynthesis; UDP-N-acetyl-alpha-D-glucosamine biosynthesis; N-acetyl-alpha-D-glucosamine 1-phosphate from alpha-D-glucosamine 6-phosphate (route II): step 2/2. The protein operates within nucleotide-sugar biosynthesis; UDP-N-acetyl-alpha-D-glucosamine biosynthesis; UDP-N-acetyl-alpha-D-glucosamine from N-acetyl-alpha-D-glucosamine 1-phosphate: step 1/1. It participates in bacterial outer membrane biogenesis; LPS lipid A biosynthesis. Its function is as follows. Catalyzes the last two sequential reactions in the de novo biosynthetic pathway for UDP-N-acetylglucosamine (UDP-GlcNAc). The C-terminal domain catalyzes the transfer of acetyl group from acetyl coenzyme A to glucosamine-1-phosphate (GlcN-1-P) to produce N-acetylglucosamine-1-phosphate (GlcNAc-1-P), which is converted into UDP-GlcNAc by the transfer of uridine 5-monophosphate (from uridine 5-triphosphate), a reaction catalyzed by the N-terminal domain. The protein is Bifunctional protein GlmU of Clostridium tetani (strain Massachusetts / E88).